A 375-amino-acid chain; its full sequence is Oleosin-B6 (375 aa).

The tract at residues 1 to 32 (MKEEIQNETAQTQLQREGRMFSFLFPVIEVIK) is polar. The next 3 helical transmembrane spans lie at 21–43 (FSFL…SVVF), 55–75 (AVAL…LVPA), and 81–101 (LLAT…GLLM). The hydrophobic stretch occupies residues 33-112 (VVMASVASVV…LIKHPGKEGA (80 aa)). Disordered regions lie at residues 144–284 (PGVG…SFLS) and 303–375 (IPGF…DESS). Basic and acidic residues predominate over residues 148–179 (KKSEGRGESKGKKGKKGKSEHGRGKHEGEGKS). Residues 193-210 (NNPPPAGAPPTGSPPAAP) are compositionally biased toward pro residues. 23 consecutive repeat copies span residues 207 to 209 (PAA), 210 to 212 (PAA), 213 to 215 (PEA), 216 to 218 (PAA), 219 to 221 (PAA), 222 to 224 (PAA), 225 to 227 (PAA), 228 to 230 (PAA), 231 to 233 (PAA), 234 to 236 (PAA), 237 to 239 (PED), 240 to 242 (PAA), 243 to 245 (PAA), 246 to 248 (PEA), 249 to 251 (PAT), 252 to 254 (PAA), 255 to 257 (PPA), 258 to 260 (PAA), 261 to 263 (APA), 264 to 266 (PAA), 267 to 269 (PAA), 270 to 272 (PPA), and 273 to 275 (PAA). The segment at 207-275 (PAAPAAPEAP…APAAPPAPAA (69 aa)) is 23 X 3 AA approximate tandem repeats of P-A-A. The segment covering 211 to 251 (AAPEAPAAPAAPAAPAAPAAPAAPAAPEDPAAPAAPEAPAT) has biased composition (low complexity). Positions 252-280 (PAAPPAPAAAPAPAAPAAPPAPAAPPRPP) are enriched in pro residues. Residues 316–331 (SKGGKKSKGKGKSNGR) are compositionally biased toward basic residues.

The protein belongs to the oleosin family. The full-length protein is found in the tapetal lipid bodies of immature anthers, the proteolytically cleaved C-terminal product is found on the coats of pollen grains. Not found in flowers, developing embryos or leaf tissue.

The protein localises to the lipid droplet. The protein resides in the membrane. Its function is as follows. Many of the major pollen coat proteins are derived from endoproteolytic cleavage of oleosin-like proteins. The chain is Oleosin-B6 from Brassica napus (Rape).